The following is a 420-amino-acid chain: Zinc finger protein 362 (420 aa).

3 disordered regions span residues 1–28, 54–80, and 115–155; these read MSRS…WPPP, RPPH…ESSQ, and VTGL…SQSR. Low complexity predominate over residues 121-154; sequence STRTPSVSTSESSAGAGTGTGTSTPSTPTTTSQS. Thr162 carries the phosphothreonine modification. The disordered stretch occupies residues 178-202; the sequence is TIQGHGLLGPPKSERGRKKIKAENP. Residue Lys198 forms a Glycyl lysine isopeptide (Lys-Gly) (interchain with G-Cter in SUMO2) linkage. 6 C2H2-type zinc fingers span residues 227 to 249, 255 to 277, 283 to 305, 311 to 335, 341 to 363, and 371 to 393; these read YRCK…SKSH, HKCP…LRIH, YHCS…TRIH, YKCP…QRQH, YKCP…LSAH, and YCCS…MSKH. Ser404 is subject to Phosphoserine.

The protein belongs to the krueppel C2H2-type zinc-finger protein family.

The protein localises to the nucleus. Functionally, may be involved in transcriptional regulation. The polypeptide is Zinc finger protein 362 (ZNF362) (Homo sapiens (Human)).